The primary structure comprises 645 residues: Meiosis induction protein kinase IME2/SME1 (645 aa).

The segment at 1-24 (MVEKRSRQSSSSGSEFSVPPDVDN) is disordered. Residues 8-17 (QSSSSGSEFS) are compositionally biased toward low complexity. Positions 38–386 (YQLIEKLGAG…AQELCEMPFF (349 aa)) constitute a Protein kinase domain. ATP-binding positions include 44–52 (LGAGSFGCV) and lysine 67. Aspartate 193 (proton acceptor) is an active-site residue.

It belongs to the protein kinase superfamily. Ser/Thr protein kinase family.

The enzyme catalyses L-seryl-[protein] + ATP = O-phospho-L-seryl-[protein] + ADP + H(+). It carries out the reaction L-threonyl-[protein] + ATP = O-phospho-L-threonyl-[protein] + ADP + H(+). Its function is as follows. Protein kinase which is essential for the initiation of meiosis and sporulation. This chain is Meiosis induction protein kinase IME2/SME1 (IME2), found in Saccharomyces cerevisiae (strain ATCC 204508 / S288c) (Baker's yeast).